The sequence spans 874 residues: Coatomer subunit gamma-1 (874 aa).

Over residues 1 to 11 (MLKKFDKKDEE) the composition is skewed to basic and acidic residues. The interval 1-21 (MLKKFDKKDEESGGGSNPFQH) is disordered. HEAT repeat units follow at residues 64–101 (TEATEAFFAMTKLFQSNDPTLRRMCYLTIKEMSCIAED), 283–320 (KELAPAVSVLQLFCSSPKAALRYAAVRTLNKVAMKHPS), 322–355 (VTACNLDLENLVTDANRSIATLAITTLLKTGSEG), and 356–392 (SIDRLMKQISSFMSEISDEFKVVVVQAISALCQKYPR). The residue at position 594 (T594) is a Phosphothreonine. Residues 609 to 874 (RQEIFQEQLA…PVDIVLASVG (266 aa)) form an interaction with ZNF289/ARFGAP2 region.

The protein belongs to the COPG family. Oligomeric complex that consists of at least the alpha, beta, beta', gamma, delta, epsilon and zeta subunits. Interacts with ZNF289/ARFGAP2 through its C-terminal appendage domain. Interacts with EGFR upon EGF treatment; interaction is essential for regulation of EGF-dependent nuclear transport of EGFR by retrograde trafficking from the Golgi to the ER. The coatomer interacts with KDEL receptors; the interaction is important for retrograde trafficking of KDEL-bearing proteins from the Golgi to the endoplasmic reticulum. Interacts with COPB1. Interacts with TMED10 (via C-terminus). Interacts with TMED2, TMED3, TMED7 and TMED9.

The protein resides in the cytoplasm. It localises to the cytosol. The protein localises to the golgi apparatus membrane. It is found in the cytoplasmic vesicle. Its subcellular location is the COPI-coated vesicle membrane. In terms of biological role, the coatomer is a cytosolic protein complex that binds to dilysine motifs and reversibly associates with Golgi non-clathrin-coated vesicles, which further mediate biosynthetic protein transport from the ER, via the Golgi up to the trans Golgi network. Coatomer complex is required for budding from Golgi membranes, and is essential for the retrograde Golgi-to-ER transport of dilysine-tagged proteins. In mammals, the coatomer can only be recruited by membranes associated to ADP-ribosylation factors (ARFs), which are small GTP-binding proteins; the complex also influences the Golgi structural integrity, as well as the processing, activity, and endocytic recycling of LDL receptors. Required for limiting lipid storage in lipid droplets. Involved in lipid homeostasis by regulating the presence of perilipin family members PLIN2 and PLIN3 at the lipid droplet surface and promoting the association of adipocyte triglyceride lipase (PNPLA2) with the lipid droplet surface to mediate lipolysis. This Bos taurus (Bovine) protein is Coatomer subunit gamma-1 (COPG1).